The following is a 473-amino-acid chain: Double-stranded RNA-binding protein 7 (473 aa).

A compositionally biased stretch (pro residues) spans 1–10 (MDMPPTPLPP). A disordered region spans residues 1 to 22 (MDMPPTPLPPETANTSPAPNGA). DRBM domains are found at residues 33–102 (VFKS…EIVK) and 118–185 (LCKN…AIQG). Composition is skewed to basic and acidic residues over residues 286–307 (KRVE…ENQH), 317–327 (DEARVEQEPSR), and 416–427 (VDARVVKEESPR). 2 disordered regions span residues 286-329 (KRVE…SRDI) and 393-473 (QLNE…MSEE). Over residues 433–450 (EATNMKETPKNSAVCNSP) the composition is skewed to polar residues.

Its function is as follows. Binds double-stranded RNA. The chain is Double-stranded RNA-binding protein 7 (DRB7) from Oryza sativa subsp. japonica (Rice).